The chain runs to 407 residues: Uronyl 2-sulfotransferase (407 aa).

Residues 1-20 (MKKKQQQHPGGGTDPWPHGA) are disordered. The Cytoplasmic segment spans residues 1–49 (MKKKQQQHPGGGTDPWPHGAPVGGAPPCLGSCKRRIPLLPFLRFSLRDY). Residues 50–70 (GFCMATLLVFCLGSLFYQLSG) form a helical; Signal-anchor for type II membrane protein membrane-spanning segment. Topologically, residues 71 to 407 (GPPRFLLDLR…EKWLEDIYKR (337 aa)) are lumenal. Residues asparagine 85, asparagine 141, and asparagine 156 are each glycosylated (N-linked (GlcNAc...) asparagine). Residue histidine 169 is part of the active site. Asparagine 174 and asparagine 320 each carry an N-linked (GlcNAc...) asparagine glycan. Positions 386 to 400 (TEEPIDDEEQDDEKW) are enriched in acidic residues. The disordered stretch occupies residues 386–407 (TEEPIDDEEQDDEKWLEDIYKR).

Belongs to the sulfotransferase 3 family.

The protein resides in the golgi apparatus membrane. In terms of biological role, sulfotransferase that catalyzes the transfer of sulfate to the position 2 of uronyl residues in glycosaminoglycan chains. Has mainly activity toward iduronyl residues in dermatan sulfate, and weaker activity toward glucuronyl residues of chondroitin sulfate. Has no activity toward desulfated N-resulfated heparin. This is Uronyl 2-sulfotransferase from Mus musculus (Mouse).